Here is a 333-residue protein sequence, read N- to C-terminus: Autoinducer 2 import system permease protein LsrD (333 aa).

The next 10 membrane-spanning stretches (helical) occupy residues 7–27 (YGWE…FGLS), 45–65 (ICIG…GIDI), 67–87 (FGST…AGVP), 90–110 (VAIP…AGLI), 118–138 (LVIT…LSGL), 162–182 (LFGL…FWLL), 212–232 (TLCM…ILLV), 240–260 (SDLG…GGAN), 261–281 (IYGG…VGYL), and 288–308 (IGTP…LVVV).

Belongs to the binding-protein-dependent transport system permease family. AraH/RbsC subfamily. As to quaternary structure, the complex is composed of two ATP-binding proteins (LsrA), two transmembrane proteins (LsrC and LsrD) and a solute-binding protein (LsrB).

It localises to the cell inner membrane. Functionally, part of the ABC transporter complex LsrABCD involved in autoinducer 2 (AI-2) import. Probably responsible for the translocation of the substrate across the membrane. In Yersinia pseudotuberculosis serotype O:1b (strain IP 31758), this protein is Autoinducer 2 import system permease protein LsrD (lsrD).